Here is a 167-residue protein sequence, read N- to C-terminus: Peptide deformylase (167 aa).

The Fe cation site is built by Cys91 and His133. The active site involves Glu134. His137 lines the Fe cation pocket.

It belongs to the polypeptide deformylase family. The cofactor is Fe(2+).

The catalysed reaction is N-terminal N-formyl-L-methionyl-[peptide] + H2O = N-terminal L-methionyl-[peptide] + formate. Functionally, removes the formyl group from the N-terminal Met of newly synthesized proteins. Requires at least a dipeptide for an efficient rate of reaction. N-terminal L-methionine is a prerequisite for activity but the enzyme has broad specificity at other positions. This Neisseria meningitidis serogroup C (strain 053442) protein is Peptide deformylase.